The sequence spans 413 residues: Protein LAZY 1 (413 aa).

Residues 71-91 (FTFGGSGLLTIGTLGIAAVAV) form a helical membrane-spanning segment. Acidic residues predominate over residues 103-124 (DADADSDFDDNDDTAGDDEDQV). Disordered regions lie at residues 103 to 127 (DADA…VDSA) and 261 to 308 (EDGG…ASAT). 2 short sequence motifs (nuclear localization signal) span residues 275 to 298 (RKAG…EKVP) and 338 to 345 (KKSRKRGS).

The protein belongs to the LAZY family. As to expression, expressed in the node of the stem, initiating leaf founder cells, young leaf primordia, tips of axillary meristems, spikelet pair meristems of developing tassels and ears, male flower primordia, tassels, ears, silks and seeds. Expressed in leaf sheaths, leaf pulvinus and shoot apical meristem (SAM).

The protein resides in the cell membrane. It localises to the nucleus. Involved in the regulation of shoot gravitropism, and tassel and ear development through the regulation of polar auxin transport (PAT) and auxin signaling. Acts as a negative regulator of basipetal PAT, but positive regulator of lateral auxin transport. Involved in the regulation of shoot gravitropism and leaf angle through the regulation of cell development. The sequence is that of Protein LAZY 1 from Zea mays (Maize).